A 332-amino-acid chain; its full sequence is Putative D-threonate 4-phosphate dehydrogenase (332 aa).

Substrate-binding residues include histidine 138 and threonine 139. A divalent metal cation is bound by residues histidine 168, histidine 211, and histidine 266. The substrate site is built by lysine 274 and arginine 292.

This sequence belongs to the PdxA family. PdxA2 subfamily. Homodimer. The cofactor is a divalent metal cation.

The enzyme catalyses 4-O-phospho-D-threonate + NAD(+) = dihydroxyacetone phosphate + CO2 + NADH. In terms of biological role, catalyzes the NAD-dependent oxidation and subsequent decarboxylation of D-threonate 4-phosphate to produce dihydroxyacetone phosphate (DHAP). This is Putative D-threonate 4-phosphate dehydrogenase from Fusobacterium nucleatum subsp. nucleatum (strain ATCC 25586 / DSM 15643 / BCRC 10681 / CIP 101130 / JCM 8532 / KCTC 2640 / LMG 13131 / VPI 4355).